The chain runs to 120 residues: Large ribosomal subunit protein uL18 (120 aa).

It belongs to the universal ribosomal protein uL18 family. In terms of assembly, part of the 50S ribosomal subunit; part of the 5S rRNA/L5/L18/L25 subcomplex. Contacts the 5S and 23S rRNAs.

This is one of the proteins that bind and probably mediate the attachment of the 5S RNA into the large ribosomal subunit, where it forms part of the central protuberance. This chain is Large ribosomal subunit protein uL18, found in Bradyrhizobium sp. (strain ORS 278).